The sequence spans 191 residues: Phosphopantetheine adenylyltransferase (191 aa).

S8 is a substrate binding site. ATP contacts are provided by residues 8–9 and H16; that span reads SF. Substrate-binding residues include K40, T72, and R86. ATP is bound by residues 87–89, E97, and 122–128; these read GLR and YSFLSSS.

The protein belongs to the bacterial CoaD family. Homohexamer. The cofactor is Mg(2+).

It is found in the cytoplasm. The enzyme catalyses (R)-4'-phosphopantetheine + ATP + H(+) = 3'-dephospho-CoA + diphosphate. It participates in cofactor biosynthesis; coenzyme A biosynthesis; CoA from (R)-pantothenate: step 4/5. In terms of biological role, reversibly transfers an adenylyl group from ATP to 4'-phosphopantetheine, yielding dephospho-CoA (dPCoA) and pyrophosphate. In Nostoc sp. (strain PCC 7120 / SAG 25.82 / UTEX 2576), this protein is Phosphopantetheine adenylyltransferase.